Reading from the N-terminus, the 107-residue chain is Quaternary ammonium compound-resistance protein QacC (107 aa).

3 consecutive transmembrane segments (helical) span residues 26 to 46, 57 to 77, and 84 to 104; these read FSKFIPSLGTIISFGICFYFL, ITYATWAGLGLVLTTVVSIII, and LITIVSIVLIIVGVVSLNIFG.

The protein belongs to the drug/metabolite transporter (DMT) superfamily. Small multidrug resistance (SMR) (TC 2.A.7.1) family.

The protein resides in the cell membrane. Multidrug exporter. Is implicated for the resistance to bacteriocidal quaternary ammonium compounds. This chain is Quaternary ammonium compound-resistance protein QacC, found in Staphylococcus sp. (strain ST827).